The following is a 381-amino-acid chain: Guanine nucleotide-binding protein G(olf) subunit alpha (381 aa).

The disordered stretch occupies residues 1 to 25 (MGCLGNSSKTAEDQGVDEKERREAN). Glycine 2 carries N-palmitoyl glycine lipidation. Cysteine 3 is lipidated: S-palmitoyl cysteine. The span at 10–25 (TAEDQGVDEKERREAN) shows a compositional bias: basic and acidic residues. Residues 41–381 (ATHRLLLLGA…RMHLKQYELL (341 aa)) enclose the G-alpha domain. Residues 44-57 (RLLLLGAGESGKST) form a G1 motif region. Residues glutamate 52, serine 53, glycine 54, lysine 55, serine 56, and threonine 57 each coordinate GTP. Mg(2+) is bound at residue serine 56. The residue at position 178 (threonine 178) is a Phosphothreonine. Positions 183–191 (DLLRCRVLT) are G2 motif. Positions 185, 186, and 191 each coordinate GTP. Threonine 191 and aspartate 210 together coordinate Mg(2+). A G3 motif region spans residues 206–215 (FHMFDVGGQR). Residues glycine 213, asparagine 279, lysine 280, aspartate 282, and alanine 353 each contribute to the GTP site. Residues 275–282 (ILFLNKQD) are G4 motif. A G5 motif region spans residues 351–356 (TCAVDT).

This sequence belongs to the G-alpha family. G(s) subfamily. G proteins are composed of 3 units; alpha, beta and gamma. The alpha chain contains the guanine nucleotide binding site. Interacts with GAS2L2. Interacts (GDP-bound form) with RIC8B (via C-terminus); promoting GNAL folding and association with the plasma membrane.

The protein localises to the cell membrane. It catalyses the reaction GTP + H2O = GDP + phosphate + H(+). Its function is as follows. Guanine nucleotide-binding protein (G protein) involved as transducer in olfactory signal transduction controlled by G protein-coupled receptors (GPCRs). Contains the guanine nucleotide binding site and alternates between an active, GTP-bound state and an inactive, GDP-bound state. Signaling by an activated GPCR promotes GDP release and GTP binding. The alpha subunit has a low GTPase activity that converts bound GTP to GDP, thereby terminating the signal. Both GDP release and GTP hydrolysis are modulated by numerous regulatory proteins. GNAL/G(olf) alpha specifically mediates olfactory signal transduction within the olfactory neuroepithelium and the basal ganglia following GPCRs activation. Acts by promoting the specific activation of adenylyl cyclase ADCY3, resulting in increased levels of the signaling molecule cAMP. The chain is Guanine nucleotide-binding protein G(olf) subunit alpha from Mus musculus (Mouse).